Here is a 147-residue protein sequence, read N- to C-terminus: Large ribosomal subunit protein uL15 (147 aa).

The segment at Met-1–Arg-59 is disordered. The segment covering Ser-42–Gly-52 has biased composition (gly residues).

Belongs to the universal ribosomal protein uL15 family. As to quaternary structure, part of the 50S ribosomal subunit.

Functionally, binds to the 23S rRNA. The polypeptide is Large ribosomal subunit protein uL15 (Caldicellulosiruptor bescii (strain ATCC BAA-1888 / DSM 6725 / KCTC 15123 / Z-1320) (Anaerocellum thermophilum)).